The chain runs to 116 residues: MARIAGVDLPRDKRIVIALTYIYGIGEHTAQEICAAAGVSEDVRSKDLTPEQQEKLRAEVDKYRVEGDLRREVSMNIKRLVDIGSYRGIRHRRGLPVRGQNTKNNARTRKGAKRSR.

The disordered stretch occupies residues 92–116 (RRGLPVRGQNTKNNARTRKGAKRSR). Over residues 106 to 116 (ARTRKGAKRSR) the composition is skewed to basic residues.

Belongs to the universal ribosomal protein uS13 family. Part of the 30S ribosomal subunit. Forms a loose heterodimer with protein S19. Forms two bridges to the 50S subunit in the 70S ribosome.

Functionally, located at the top of the head of the 30S subunit, it contacts several helices of the 16S rRNA. In the 70S ribosome it contacts the 23S rRNA (bridge B1a) and protein L5 of the 50S subunit (bridge B1b), connecting the 2 subunits; these bridges are implicated in subunit movement. Contacts the tRNAs in the A and P-sites. This Lactobacillus delbrueckii subsp. bulgaricus (strain ATCC 11842 / DSM 20081 / BCRC 10696 / JCM 1002 / NBRC 13953 / NCIMB 11778 / NCTC 12712 / WDCM 00102 / Lb 14) protein is Small ribosomal subunit protein uS13.